The sequence spans 307 residues: Transcription initiation factor IIB (307 aa).

Repeat copies occupy residues 123-206 and 217-298.

It belongs to the TFIIB family.

In terms of biological role, stabilizes TBP binding to an archaeal box-A promoter. Also responsible for recruiting RNA polymerase II to the pre-initiation complex (DNA-TBP-TFIIB). The chain is Transcription initiation factor IIB from Sulfolobus acidocaldarius (strain ATCC 33909 / DSM 639 / JCM 8929 / NBRC 15157 / NCIMB 11770).